The chain runs to 453 residues: tRNA-2-methylthio-N(6)-dimethylallyladenosine synthase (453 aa).

The MTTase N-terminal domain occupies 11-131 (KSFHVKSFGC…LPQLVADAAE (121 aa)). [4Fe-4S] cluster-binding residues include Cys-20, Cys-56, Cys-94, Cys-167, Cys-171, and Cys-174. Residues 153–385 (RRQGPTAFLT…QALLNEQQHR (233 aa)) enclose the Radical SAM core domain. The region spanning 388 to 449 (LATVGKRCEV…PNSLSGALVE (62 aa)) is the TRAM domain.

It belongs to the methylthiotransferase family. MiaB subfamily. In terms of assembly, monomer. [4Fe-4S] cluster serves as cofactor.

It is found in the cytoplasm. It carries out the reaction N(6)-dimethylallyladenosine(37) in tRNA + (sulfur carrier)-SH + AH2 + 2 S-adenosyl-L-methionine = 2-methylsulfanyl-N(6)-dimethylallyladenosine(37) in tRNA + (sulfur carrier)-H + 5'-deoxyadenosine + L-methionine + A + S-adenosyl-L-homocysteine + 2 H(+). Catalyzes the methylthiolation of N6-(dimethylallyl)adenosine (i(6)A), leading to the formation of 2-methylthio-N6-(dimethylallyl)adenosine (ms(2)i(6)A) at position 37 in tRNAs that read codons beginning with uridine. This is tRNA-2-methylthio-N(6)-dimethylallyladenosine synthase from Rhizorhabdus wittichii (strain DSM 6014 / CCUG 31198 / JCM 15750 / NBRC 105917 / EY 4224 / RW1) (Sphingomonas wittichii).